A 306-amino-acid chain; its full sequence is Acetyl-coenzyme A carboxylase carboxyl transferase subunit beta (306 aa).

Positions 28-297 constitute a CoA carboxyltransferase N-terminal domain; it reads LWIKCPDTGQ…TPAGKPSTPV (270 aa). The disordered stretch occupies residues 287–306; sequence QTPAGKPSTPVAPEPVPDAA. The segment covering 296 to 306 has biased composition (pro residues); sequence PVAPEPVPDAA.

It belongs to the AccD/PCCB family. As to quaternary structure, acetyl-CoA carboxylase is a heterohexamer composed of biotin carboxyl carrier protein (AccB), biotin carboxylase (AccC) and two subunits each of ACCase subunit alpha (AccA) and ACCase subunit beta (AccD).

It localises to the cytoplasm. The catalysed reaction is N(6)-carboxybiotinyl-L-lysyl-[protein] + acetyl-CoA = N(6)-biotinyl-L-lysyl-[protein] + malonyl-CoA. It functions in the pathway lipid metabolism; malonyl-CoA biosynthesis; malonyl-CoA from acetyl-CoA: step 1/1. In terms of biological role, component of the acetyl coenzyme A carboxylase (ACC) complex. Biotin carboxylase (BC) catalyzes the carboxylation of biotin on its carrier protein (BCCP) and then the CO(2) group is transferred by the transcarboxylase to acetyl-CoA to form malonyl-CoA. In Methylorubrum populi (strain ATCC BAA-705 / NCIMB 13946 / BJ001) (Methylobacterium populi), this protein is Acetyl-coenzyme A carboxylase carboxyl transferase subunit beta.